Reading from the N-terminus, the 380-residue chain is Cytochrome b (380 aa).

4 helical membrane-spanning segments follow: residues 34-54 (FGSLLGICLITQILTGLLLAA), 78-99 (WLIRNLHANGASFFFICIYLHI), 114-134 (WNTGVTLLLTLMATAFVGYVL), and 179-199 (FFALHFLLPFMIAGLTLIHLT). His84 and His98 together coordinate heme b. Residues His183 and His197 each coordinate heme b. Residue His202 coordinates a ubiquinone. 4 helical membrane-spanning segments follow: residues 227–247 (LKDILGFAIMLLLLTTLALFS), 289–309 (LGGVLALAASVLILFLTPFLH), 321–341 (LSQLLFWLLVANLLILTWVGS), and 348–368 (FIIIGQMASITYFIIILVLFP).

Belongs to the cytochrome b family. The cytochrome bc1 complex contains 11 subunits: 3 respiratory subunits (MT-CYB, CYC1 and UQCRFS1), 2 core proteins (UQCRC1 and UQCRC2) and 6 low-molecular weight proteins (UQCRH/QCR6, UQCRB/QCR7, UQCRQ/QCR8, UQCR10/QCR9, UQCR11/QCR10 and a cleavage product of UQCRFS1). This cytochrome bc1 complex then forms a dimer. Heme b is required as a cofactor.

It localises to the mitochondrion inner membrane. Its function is as follows. Component of the ubiquinol-cytochrome c reductase complex (complex III or cytochrome b-c1 complex) that is part of the mitochondrial respiratory chain. The b-c1 complex mediates electron transfer from ubiquinol to cytochrome c. Contributes to the generation of a proton gradient across the mitochondrial membrane that is then used for ATP synthesis. This chain is Cytochrome b (MT-CYB), found in Pharomachrus antisianus (Crested quetzal).